A 124-amino-acid chain; its full sequence is Small ribosomal subunit protein uS12 (124 aa).

At aspartate 89 the chain carries 3-methylthioaspartic acid. Positions 104 to 124 are disordered; the sequence is ATGVKDRKQGRSKYGAKRPKE. The segment covering 113–124 has biased composition (basic residues); sequence GRSKYGAKRPKE.

Belongs to the universal ribosomal protein uS12 family. As to quaternary structure, part of the 30S ribosomal subunit. Contacts proteins S8 and S17. May interact with IF1 in the 30S initiation complex.

Functionally, with S4 and S5 plays an important role in translational accuracy. In terms of biological role, interacts with and stabilizes bases of the 16S rRNA that are involved in tRNA selection in the A site and with the mRNA backbone. Located at the interface of the 30S and 50S subunits, it traverses the body of the 30S subunit contacting proteins on the other side and probably holding the rRNA structure together. The combined cluster of proteins S8, S12 and S17 appears to hold together the shoulder and platform of the 30S subunit. This chain is Small ribosomal subunit protein uS12, found in Picosynechococcus sp. (strain ATCC 27264 / PCC 7002 / PR-6) (Agmenellum quadruplicatum).